The chain runs to 162 residues: Protein-export protein SecB (162 aa).

It belongs to the SecB family. Homotetramer, a dimer of dimers. One homotetramer interacts with 1 SecA dimer.

It localises to the cytoplasm. One of the proteins required for the normal export of preproteins out of the cell cytoplasm. It is a molecular chaperone that binds to a subset of precursor proteins, maintaining them in a translocation-competent state. It also specifically binds to its receptor SecA. The polypeptide is Protein-export protein SecB (Pseudomonas savastanoi pv. phaseolicola (strain 1448A / Race 6) (Pseudomonas syringae pv. phaseolicola (strain 1448A / Race 6))).